Reading from the N-terminus, the 238-residue chain is Enolase-phosphatase E1 (238 aa).

2 residues coordinate Mg(2+): D14 and E16. Substrate-binding positions include 128–129 and K165; that span reads SS. D192 contributes to the Mg(2+) binding site.

It belongs to the HAD-like hydrolase superfamily. MasA/MtnC family. In terms of assembly, monomer. Mg(2+) serves as cofactor.

It localises to the cytoplasm. The protein resides in the nucleus. It carries out the reaction 5-methylsulfanyl-2,3-dioxopentyl phosphate + H2O = 1,2-dihydroxy-5-(methylsulfanyl)pent-1-en-3-one + phosphate. It functions in the pathway amino-acid biosynthesis; L-methionine biosynthesis via salvage pathway; L-methionine from S-methyl-5-thio-alpha-D-ribose 1-phosphate: step 3/6. Its pathway is amino-acid biosynthesis; L-methionine biosynthesis via salvage pathway; L-methionine from S-methyl-5-thio-alpha-D-ribose 1-phosphate: step 4/6. Functionally, bifunctional enzyme that catalyzes the enolization of 2,3-diketo-5-methylthiopentyl-1-phosphate (DK-MTP-1-P) into the intermediate 2-hydroxy-3-keto-5-methylthiopentenyl-1-phosphate (HK-MTPenyl-1-P), which is then dephosphorylated to form the acireductone 1,2-dihydroxy-3-keto-5-methylthiopentene (DHK-MTPene). This is Enolase-phosphatase E1 from Fusarium vanettenii (strain ATCC MYA-4622 / CBS 123669 / FGSC 9596 / NRRL 45880 / 77-13-4) (Fusarium solani subsp. pisi).